The primary structure comprises 256 residues: MKINEIKDLLQADSIDPAILAELAKDDRKGVQKLLVSYQRRQEKLAKQKEEFLGRFSYEKDFWAKGQLVGGVDEVGRGPLAGPVVAAAVILPEDFSLLEVNDSKKLSPQKRLALYPKILQEAVAVGVGVMDNKVIDQINIYEADRLAMKQAVEALSTRPDALLVDAMNVPVDLPQLELIKGDAKSNSIAAASIVAKVFRDSLMDDYARLYPDYAFDHNAGYGTKDHLEALRKYGPTPIHRLTFSPVSEMVGLKKAD.

The region spanning 67-255 (QLVGGVDEVG…VSEMVGLKKA (189 aa)) is the RNase H type-2 domain. A divalent metal cation contacts are provided by D73, E74, and D165.

It belongs to the RNase HII family. Requires Mn(2+) as cofactor. The cofactor is Mg(2+).

Its subcellular location is the cytoplasm. The catalysed reaction is Endonucleolytic cleavage to 5'-phosphomonoester.. In terms of biological role, endonuclease that specifically degrades the RNA of RNA-DNA hybrids. This is Ribonuclease HII from Lactobacillus delbrueckii subsp. bulgaricus (strain ATCC 11842 / DSM 20081 / BCRC 10696 / JCM 1002 / NBRC 13953 / NCIMB 11778 / NCTC 12712 / WDCM 00102 / Lb 14).